The chain runs to 598 residues: 2-succinyl-5-enolpyruvyl-6-hydroxy-3-cyclohexene-1-carboxylate synthase (598 aa).

This sequence belongs to the TPP enzyme family. MenD subfamily. In terms of assembly, homodimer. Mg(2+) serves as cofactor. The cofactor is Mn(2+). Requires thiamine diphosphate as cofactor.

The enzyme catalyses isochorismate + 2-oxoglutarate + H(+) = 5-enolpyruvoyl-6-hydroxy-2-succinyl-cyclohex-3-ene-1-carboxylate + CO2. It participates in quinol/quinone metabolism; 1,4-dihydroxy-2-naphthoate biosynthesis; 1,4-dihydroxy-2-naphthoate from chorismate: step 2/7. The protein operates within cofactor biosynthesis; phylloquinone biosynthesis. Functionally, catalyzes the thiamine diphosphate-dependent decarboxylation of 2-oxoglutarate and the subsequent addition of the resulting succinic semialdehyde-thiamine pyrophosphate anion to isochorismate to yield 2-succinyl-5-enolpyruvyl-6-hydroxy-3-cyclohexene-1-carboxylate (SEPHCHC). This Prochlorococcus marinus (strain NATL1A) protein is 2-succinyl-5-enolpyruvyl-6-hydroxy-3-cyclohexene-1-carboxylate synthase.